Consider the following 532-residue polypeptide: UDP-glucuronosyltransferase 1A6 (532 aa).

The first 26 residues, 1–26 (MACLLRSFQRISAGVFFLALWGMVVG), serve as a signal peptide directing secretion. Residues N294 and N346 are each glycosylated (N-linked (GlcNAc...) asparagine). The chain crosses the membrane as a helical span at residues 490-506 (VIGFLLAVVLTVAFITF).

It belongs to the UDP-glycosyltransferase family. In terms of assembly, isoform 1 interacts with isoform 3/i2 suggesting that oligomerization is involved in negative regulation of transferase activity by isoform 3. Isoform 1 also interacts with respective i2 isoforms of UGT1A1, UGT1A3, UGT1A4, UGT1A7, UGT1A8, UGT1A9 and UGT1A10. Expressed in skin. Isoforms 1 and 3 are expressed in kidney and liver. Isoform 1 but not isoform 2 is expressed in colon, esophagus and small intestine.

The protein localises to the microsome. It is found in the endoplasmic reticulum membrane. It carries out the reaction glucuronate acceptor + UDP-alpha-D-glucuronate = acceptor beta-D-glucuronoside + UDP + H(+). It catalyses the reaction (5Z,8Z,11Z,14Z)-eicosatetraenoate + UDP-alpha-D-glucuronate = O-[(5Z),(8Z),(11Z),(14Z)-eicosatetraenoyl]-beta-D-glucuronate + UDP. The enzyme catalyses 15-hydroxy-(5Z,8Z,11Z,13E)-eicosatetraenoate + UDP-alpha-D-glucuronate = 15-O-(beta-D-glucuronosyl)-(5Z,8Z,11Z,14Z)-eicosatetraenoate + UDP + H(+). The catalysed reaction is (E)-ferulate + UDP-alpha-D-glucuronate = (E)-4-O-(beta-D-glucuronosyl)-ferulate + UDP + H(+). It carries out the reaction (E)-ferulate + UDP-alpha-D-glucuronate = (E)-ferulic acid beta-D-glucuronate ester + UDP. UDP-glucuronosyltransferase (UGT) that catalyzes phase II biotransformation reactions in which lipophilic substrates are conjugated with glucuronic acid to facilitate their inactivation and excretion from the body. Essential for the elimination and detoxification of drugs, xenobiotics and endogenous compounds. Involved in the glucuronidation of arachidonic acid (AA) and AA-derived eicosanoids including 15-HETE and 20-HETE. Conjugates small planar phenolic molecules such as 4-nitrophenol, 1-naphthol, and 4-methylumbelliferone. The bulky phenol 4-hydroxybiphenyl, androgens and estrogens are not substrates. 2-hydroxybiphenyl is an excellent substrate. Involved in the glucuronidation of the phytochemical ferulic acid at the phenolic or the carboxylic acid group. Its function is as follows. Isoform 3 lacks transferase activity but acts as a negative regulator of isoform 1. The chain is UDP-glucuronosyltransferase 1A6 from Homo sapiens (Human).